The sequence spans 872 residues: DNA mismatch repair protein MutS (872 aa).

602–609 (GPNMSGKS) serves as a coordination point for ATP.

Belongs to the DNA mismatch repair MutS family.

This protein is involved in the repair of mismatches in DNA. It is possible that it carries out the mismatch recognition step. This protein has a weak ATPase activity. This chain is DNA mismatch repair protein MutS, found in Staphylococcus aureus (strain bovine RF122 / ET3-1).